The sequence spans 129 residues: Small ribosomal subunit protein uS9 (129 aa).

Residues S107–R129 form a disordered region. Residues K114–R129 show a composition bias toward basic residues.

It belongs to the universal ribosomal protein uS9 family.

The chain is Small ribosomal subunit protein uS9 from Sulfurovum sp. (strain NBC37-1).